The primary structure comprises 758 residues: 5-methyltetrahydropteroyltriglutamate--homocysteine methyltransferase (758 aa).

5-methyltetrahydropteroyltri-L-glutamate-binding positions include 16–19 and lysine 112; that span reads RELK. L-homocysteine-binding positions include 433–435 and glutamate 486; that span reads IGS. L-methionine-binding positions include 433-435 and glutamate 486; that span reads IGS. 5-methyltetrahydropteroyltri-L-glutamate is bound by residues 517-518 and tryptophan 563; that span reads RC. Aspartate 601 serves as a coordination point for L-homocysteine. Aspartate 601 is an L-methionine binding site. A 5-methyltetrahydropteroyltri-L-glutamate-binding site is contributed by glutamate 607. The Zn(2+) site is built by histidine 643, cysteine 645, and glutamate 667. The active-site Proton donor is histidine 696. Residue cysteine 728 participates in Zn(2+) binding.

This sequence belongs to the vitamin-B12 independent methionine synthase family. The cofactor is Zn(2+).

The catalysed reaction is 5-methyltetrahydropteroyltri-L-glutamate + L-homocysteine = tetrahydropteroyltri-L-glutamate + L-methionine. Its pathway is amino-acid biosynthesis; L-methionine biosynthesis via de novo pathway; L-methionine from L-homocysteine (MetE route): step 1/1. Its function is as follows. Catalyzes the transfer of a methyl group from 5-methyltetrahydrofolate to homocysteine resulting in methionine formation. The chain is 5-methyltetrahydropteroyltriglutamate--homocysteine methyltransferase from Neisseria meningitidis serogroup B (strain ATCC BAA-335 / MC58).